The primary structure comprises 201 residues: Phospholipase D (201 aa).

The N-terminal stretch at 1–25 is a signal peptide; sequence MKRKNKKFTEIFIAFILGIAIGVLG. Residues 142 to 169 enclose the PLD phosphodiesterase domain; that stretch reads VPGIAHNKVIIIDKKKVITGSFNFTAAA. Active-site residues include His-147, Lys-149, and Asp-154.

This sequence belongs to the phospholipase D family. In terms of assembly, homodimer.

The protein localises to the secreted. It catalyses the reaction a 1,2-diacyl-sn-glycero-3-phosphocholine + H2O = a 1,2-diacyl-sn-glycero-3-phosphate + choline + H(+). Its function is as follows. Could be a virulence factor. This chain is Phospholipase D (pld), found in Rickettsia bellii (strain RML369-C).